The chain runs to 150 residues: Transcriptional repressor NrdR (150 aa).

Residues 3–34 (CPFCNASDTKVVDTRASEDDKIVRRRRECISC) fold into a zinc finger. The ATP-cone domain maps to 49–139 (LTVVKKDKNR…VYREFTDVKS (91 aa)).

The protein belongs to the NrdR family. It depends on Zn(2+) as a cofactor.

In terms of biological role, negatively regulates transcription of bacterial ribonucleotide reductase nrd genes and operons by binding to NrdR-boxes. The polypeptide is Transcriptional repressor NrdR (Finegoldia magna (strain ATCC 29328 / DSM 20472 / WAL 2508) (Peptostreptococcus magnus)).